A 301-amino-acid polypeptide reads, in one-letter code: Protein FdhE homolog (301 aa).

This sequence belongs to the FdhE family.

The protein resides in the cytoplasm. Its function is as follows. Necessary for formate dehydrogenase activity. This Erwinia tasmaniensis (strain DSM 17950 / CFBP 7177 / CIP 109463 / NCPPB 4357 / Et1/99) protein is Protein FdhE homolog.